The chain runs to 601 residues: 1-deoxy-D-xylulose-5-phosphate synthase (601 aa).

Thiamine diphosphate-binding positions include H63 and 104–106; that span reads GHS. D135 contacts Mg(2+). Thiamine diphosphate is bound by residues 136-137, N164, Y272, and E353; that span reads GS. N164 contributes to the Mg(2+) binding site.

It belongs to the transketolase family. DXPS subfamily. In terms of assembly, homodimer. Requires Mg(2+) as cofactor. Thiamine diphosphate is required as a cofactor.

The enzyme catalyses D-glyceraldehyde 3-phosphate + pyruvate + H(+) = 1-deoxy-D-xylulose 5-phosphate + CO2. The protein operates within metabolic intermediate biosynthesis; 1-deoxy-D-xylulose 5-phosphate biosynthesis; 1-deoxy-D-xylulose 5-phosphate from D-glyceraldehyde 3-phosphate and pyruvate: step 1/1. Functionally, catalyzes the acyloin condensation reaction between C atoms 2 and 3 of pyruvate and glyceraldehyde 3-phosphate to yield 1-deoxy-D-xylulose-5-phosphate (DXP). The protein is 1-deoxy-D-xylulose-5-phosphate synthase of Aliarcobacter butzleri (strain RM4018) (Arcobacter butzleri).